The following is a 422-amino-acid chain: Dihydrolipoyllysine-residue succinyltransferase component of 2-oxoglutarate dehydrogenase complex (422 aa).

The region spanning 1-76 (MPEVKVPELA…EVGQAIAVIG (76 aa)) is the Lipoyl-binding domain. Residue lysine 42 is modified to N6-lipoyllysine. Residues 77 to 184 (EGSGNASKEN…APAKEEKKYN (108 aa)) are disordered. Composition is skewed to polar residues over residues 80–94 (GNAS…TPQQ) and 114–130 (EVNQ…NATP). One can recognise a Peripheral subunit-binding (PSBD) domain in the interval 127 to 163 (NATPSARRYARENGVNLAEVSPKTNDVVRKEDIDKKQ). Basic and acidic residues predominate over residues 152–163 (DVVRKEDIDKKQ). Over residues 164–176 (QAPASTQTTQQAP) the composition is skewed to low complexity. Catalysis depends on residues histidine 393 and aspartate 397.

The protein belongs to the 2-oxoacid dehydrogenase family. In terms of assembly, forms a 24-polypeptide structural core with octahedral symmetry. Part of the 2-oxoglutarate dehydrogenase (OGDH) complex composed of E1 (2-oxoglutarate dehydrogenase), E2 (dihydrolipoamide succinyltransferase) and E3 (dihydrolipoamide dehydrogenase); the complex contains multiple copies of the three enzymatic components (E1, E2 and E3). (R)-lipoate serves as cofactor.

The enzyme catalyses N(6)-[(R)-dihydrolipoyl]-L-lysyl-[protein] + succinyl-CoA = N(6)-[(R)-S(8)-succinyldihydrolipoyl]-L-lysyl-[protein] + CoA. It participates in amino-acid degradation; L-lysine degradation via saccharopine pathway; glutaryl-CoA from L-lysine: step 6/6. In terms of biological role, E2 component of the 2-oxoglutarate dehydrogenase (OGDH) complex which catalyzes the second step in the conversion of 2-oxoglutarate to succinyl-CoA and CO(2). This Staphylococcus aureus (strain bovine RF122 / ET3-1) protein is Dihydrolipoyllysine-residue succinyltransferase component of 2-oxoglutarate dehydrogenase complex (odhB).